A 306-amino-acid polypeptide reads, in one-letter code: Methionyl-tRNA formyltransferase (306 aa).

A (6S)-5,6,7,8-tetrahydrofolate-binding site is contributed by 105–108 (SLLP).

Belongs to the Fmt family.

It carries out the reaction L-methionyl-tRNA(fMet) + (6R)-10-formyltetrahydrofolate = N-formyl-L-methionyl-tRNA(fMet) + (6S)-5,6,7,8-tetrahydrofolate + H(+). Attaches a formyl group to the free amino group of methionyl-tRNA(fMet). The formyl group appears to play a dual role in the initiator identity of N-formylmethionyl-tRNA by promoting its recognition by IF2 and preventing the misappropriation of this tRNA by the elongation apparatus. This Rubrobacter xylanophilus (strain DSM 9941 / JCM 11954 / NBRC 16129 / PRD-1) protein is Methionyl-tRNA formyltransferase.